We begin with the raw amino-acid sequence, 502 residues long: UPF0371 protein CLD_0424 (502 aa).

It belongs to the UPF0371 family.

The sequence is that of UPF0371 protein CLD_0424 from Clostridium botulinum (strain Okra / Type B1).